We begin with the raw amino-acid sequence, 444 residues long: Biotin carboxylase 2 (444 aa).

The Biotin carboxylation domain maps to 1–444 (MFTKVLIANR…VTTDFLKQHL (444 aa)). ATP contacts are provided by residues K116, K158, 164–165 (GG), 200–203 (EKVI), H208, and H235. The ATP-grasp domain maps to 120 to 317 (RKAMEAAGVP…LVEQQLRIAA (198 aa)). K237 lines the hydrogencarbonate pocket. ATP is bound by residues E275 and E288. 3 residues coordinate Mg(2+): E275, E288, and N290. E275, E288, and N290 together coordinate Mn(2+). Residues R292, V295, and R338 each coordinate hydrogencarbonate. The active site involves R292. R338 contributes to the biotin binding site.

In terms of assembly, acetyl-CoA carboxylase is a heterohexamer of biotin carboxyl carrier protein, biotin carboxylase and the two subunits of carboxyl transferase in a 2:2 complex. Requires Mg(2+) as cofactor. Mn(2+) serves as cofactor.

The catalysed reaction is N(6)-biotinyl-L-lysyl-[protein] + hydrogencarbonate + ATP = N(6)-carboxybiotinyl-L-lysyl-[protein] + ADP + phosphate + H(+). It functions in the pathway lipid metabolism; malonyl-CoA biosynthesis; malonyl-CoA from acetyl-CoA: step 1/1. Its function is as follows. This protein is a component of the acetyl coenzyme A carboxylase complex; first, biotin carboxylase catalyzes the carboxylation of the carrier protein and then the transcarboxylase transfers the carboxyl group to form malonyl-CoA. The sequence is that of Biotin carboxylase 2 (accC2) from Bacillus subtilis (strain 168).